The sequence spans 230 residues: Large ribosomal subunit protein uL1 (230 aa).

It belongs to the universal ribosomal protein uL1 family. Part of the 50S ribosomal subunit.

Functionally, binds directly to 23S rRNA. The L1 stalk is quite mobile in the ribosome, and is involved in E site tRNA release. Its function is as follows. Protein L1 is also a translational repressor protein, it controls the translation of the L11 operon by binding to its mRNA. The polypeptide is Large ribosomal subunit protein uL1 (Gluconobacter oxydans (strain 621H) (Gluconobacter suboxydans)).